Consider the following 414-residue polypeptide: Arginine deiminase (414 aa).

The Amidino-cysteine intermediate role is filled by Cys402.

The protein belongs to the arginine deiminase family.

It is found in the cytoplasm. The catalysed reaction is L-arginine + H2O = L-citrulline + NH4(+). It participates in amino-acid degradation; L-arginine degradation via ADI pathway; carbamoyl phosphate from L-arginine: step 1/2. In Oenococcus oeni (strain ATCC BAA-331 / PSU-1), this protein is Arginine deiminase.